Reading from the N-terminus, the 201-residue chain is Ribonuclease HII (201 aa).

The region spanning 15-201 (QRVAGVDEVG…FRPVRRFLEA (187 aa)) is the RNase H type-2 domain. Residues aspartate 21, glutamate 22, and aspartate 113 each contribute to the a divalent metal cation site.

It belongs to the RNase HII family. It depends on Mn(2+) as a cofactor. Requires Mg(2+) as cofactor.

The protein resides in the cytoplasm. It catalyses the reaction Endonucleolytic cleavage to 5'-phosphomonoester.. Its function is as follows. Endonuclease that specifically degrades the RNA of RNA-DNA hybrids. The protein is Ribonuclease HII of Nitrosococcus oceani (strain ATCC 19707 / BCRC 17464 / JCM 30415 / NCIMB 11848 / C-107).